The chain runs to 105 residues: NADH-quinone oxidoreductase subunit K (105 aa).

A run of 3 helical transmembrane segments spans residues 4–24 (LTHY…GVIV), 28–48 (IIVI…SLVA), and 66–86 (LSIF…ALIV).

The protein belongs to the complex I subunit 4L family. NDH-1 is composed of 14 different subunits. Subunits NuoA, H, J, K, L, M, N constitute the membrane sector of the complex.

It localises to the cell inner membrane. It catalyses the reaction a quinone + NADH + 5 H(+)(in) = a quinol + NAD(+) + 4 H(+)(out). Functionally, NDH-1 shuttles electrons from NADH, via FMN and iron-sulfur (Fe-S) centers, to quinones in the respiratory chain. The immediate electron acceptor for the enzyme in this species is believed to be ubiquinone. Couples the redox reaction to proton translocation (for every two electrons transferred, four hydrogen ions are translocated across the cytoplasmic membrane), and thus conserves the redox energy in a proton gradient. The polypeptide is NADH-quinone oxidoreductase subunit K (Akkermansia muciniphila (strain ATCC BAA-835 / DSM 22959 / JCM 33894 / BCRC 81048 / CCUG 64013 / CIP 107961 / Muc)).